Here is a 387-residue protein sequence, read N- to C-terminus: Flap endonuclease 1 (387 aa).

The interval 1–104 (MGIKGLSQLI…GELEKRKERQ (104 aa)) is N-domain. Residue D34 coordinates Mg(2+). A DNA-binding site is contributed by R70. The Mg(2+) site is built by D86, E158, E160, D179, and D181. Residues 122 to 253 (KMVMWNKRTT…KKALAMIKKY (132 aa)) form an I-domain region. E158 is a DNA binding site. DNA-binding residues include G231 and D233. D233 is a binding site for Mg(2+). The tract at residues 332–387 (SSRGKPTQTRLDGFFTPVASSSTTKKKAPAKKDDKKSATDKKRKAADASTSSKKKK) is disordered. The interval 338 to 346 (TQTRLDGFF) is interaction with PCNA. Residues 361–371 (AKKDDKKSATD) are compositionally biased toward basic and acidic residues. Low complexity predominate over residues 378–387 (DASTSSKKKK).

Belongs to the XPG/RAD2 endonuclease family. FEN1 subfamily. In terms of assembly, interacts with PCNA. Three molecules of FEN1 bind to one PCNA trimer with each molecule binding to one PCNA monomer. PCNA stimulates the nuclease activity without altering cleavage specificity. Requires Mg(2+) as cofactor. In terms of processing, phosphorylated. Phosphorylation upon DNA damage induces relocalization to the nuclear plasma.

It is found in the nucleus. Its subcellular location is the nucleolus. It localises to the nucleoplasm. The protein resides in the mitochondrion. Structure-specific nuclease with 5'-flap endonuclease and 5'-3' exonuclease activities involved in DNA replication and repair. During DNA replication, cleaves the 5'-overhanging flap structure that is generated by displacement synthesis when DNA polymerase encounters the 5'-end of a downstream Okazaki fragment. It enters the flap from the 5'-end and then tracks to cleave the flap base, leaving a nick for ligation. Also involved in the long patch base excision repair (LP-BER) pathway, by cleaving within the apurinic/apyrimidinic (AP) site-terminated flap. Acts as a genome stabilization factor that prevents flaps from equilibrating into structures that lead to duplications and deletions. Also possesses 5'-3' exonuclease activity on nicked or gapped double-stranded DNA, and exhibits RNase H activity. Also involved in replication and repair of rDNA and in repairing mitochondrial DNA. This chain is Flap endonuclease 1, found in Naegleria gruberi (Amoeba).